A 432-amino-acid polypeptide reads, in one-letter code: MNQMLAAWQGTVTPEMEQVARDEGYPVEPVLQGVAAGTIVIPANMRRKNLKAVGIGTGLRTKVNANIGTSPKQSALDDHRVKLRVALDAGADAVMDLSTGGDLDRCRREILASCPVPVGTVPIYQAAIEAKERYGAIVAMREDELFEVVERQAKDGVDFFTIHAGVTLESLDRLRKQGRLTDIVSRGGSFLTGWMLHNDRENPFYKEFDRLLEICLAYDVALSLGDGMRPGCQADATDRAQVQELLILGELVDRCREAGVQVFVEGPGHVPLDQIIMNVQLQKRLCKGAPFYVLGPLVTDVAPGYDHITAAIGGAVAAMAGADFLCYVTPAEHLGLPTVEDVREGVIATRIAGHAADLVKRVPGAREWDERMSRARKALDWEKQIELAIDPEKARRYHTERNPEKFAGCTMCGEFCAMKLVGEYLGKDYENC.

Substrate is bound by residues N66, M95, Y124, H163, 185–187 (SRG), 226–229 (DGMR), and E265. Zn(2+) is bound at residue H269. Residue Y292 coordinates substrate. Zn(2+) is bound at residue H333. [4Fe-4S] cluster-binding residues include C409, C412, and C416.

Belongs to the ThiC family. [4Fe-4S] cluster serves as cofactor.

The catalysed reaction is 5-amino-1-(5-phospho-beta-D-ribosyl)imidazole + S-adenosyl-L-methionine = 4-amino-2-methyl-5-(phosphooxymethyl)pyrimidine + CO + 5'-deoxyadenosine + formate + L-methionine + 3 H(+). The protein operates within cofactor biosynthesis; thiamine diphosphate biosynthesis. Its function is as follows. Catalyzes the synthesis of the hydroxymethylpyrimidine phosphate (HMP-P) moiety of thiamine from aminoimidazole ribotide (AIR) in a radical S-adenosyl-L-methionine (SAM)-dependent reaction. The polypeptide is Phosphomethylpyrimidine synthase (Desulforudis audaxviator (strain MP104C)).